The sequence spans 179 residues: Archaemetzincin (179 aa).

His-128 is a Zn(2+) binding site. Catalysis depends on Glu-129, which acts as the Proton acceptor. Residues His-132, His-138, Cys-139, Cys-144, Cys-163, and Cys-166 each contribute to the Zn(2+) site.

The protein belongs to the peptidase M54 family. Monomer. Zn(2+) serves as cofactor.

Functionally, probable zinc metalloprotease whose natural substrate is unknown. The protein is Archaemetzincin of Methanocaldococcus jannaschii (strain ATCC 43067 / DSM 2661 / JAL-1 / JCM 10045 / NBRC 100440) (Methanococcus jannaschii).